We begin with the raw amino-acid sequence, 343 residues long: S-adenosylmethionine:tRNA ribosyltransferase-isomerase (343 aa).

The protein belongs to the QueA family. In terms of assembly, monomer.

It localises to the cytoplasm. It catalyses the reaction 7-aminomethyl-7-carbaguanosine(34) in tRNA + S-adenosyl-L-methionine = epoxyqueuosine(34) in tRNA + adenine + L-methionine + 2 H(+). It functions in the pathway tRNA modification; tRNA-queuosine biosynthesis. Functionally, transfers and isomerizes the ribose moiety from AdoMet to the 7-aminomethyl group of 7-deazaguanine (preQ1-tRNA) to give epoxyqueuosine (oQ-tRNA). This chain is S-adenosylmethionine:tRNA ribosyltransferase-isomerase, found in Geotalea uraniireducens (strain Rf4) (Geobacter uraniireducens).